A 468-amino-acid chain; its full sequence is 6-phosphogluconate dehydrogenase, decarboxylating (468 aa).

Residues 10-15, 33-35, 74-76, and N102 contribute to the NADP(+) site; these read GMAVMG, NRS, and VKA. Residues N102 and 128–130 contribute to the substrate site; that span reads SGG. The active-site Proton acceptor is the K183. 186-187 is a substrate binding site; the sequence is HN. Catalysis depends on E190, which acts as the Proton donor. Residues Y191, K260, R287, R445, and H451 each contribute to the substrate site.

The protein belongs to the 6-phosphogluconate dehydrogenase family. Homodimer.

The enzyme catalyses 6-phospho-D-gluconate + NADP(+) = D-ribulose 5-phosphate + CO2 + NADPH. It participates in carbohydrate degradation; pentose phosphate pathway; D-ribulose 5-phosphate from D-glucose 6-phosphate (oxidative stage): step 3/3. Functionally, catalyzes the oxidative decarboxylation of 6-phosphogluconate to ribulose 5-phosphate and CO(2), with concomitant reduction of NADP to NADPH. The chain is 6-phosphogluconate dehydrogenase, decarboxylating (gnd) from Escherichia coli.